A 156-amino-acid chain; its full sequence is V-type proton ATPase 16 kDa proteolipid subunit c (156 aa).

Residues 1-7 (MAENPIY) lie on the Lumenal side of the membrane. Residues 8–30 (GPFFGVMGAASAIIFSALGAAYG) traverse the membrane as a helical segment. Over 31–52 (TAKSGTGIAAMSVMRPELIMKS) the chain is Cytoplasmic. Residues 53-73 (IIPVVMAGIIAIYGLVVAVLI) traverse the membrane as a helical segment. Over 74-92 (AGSLDSPSNNYTLYRGFIH) the chain is Lumenal. Residues 93-114 (LGAGLAVGFSGLAAGFAIGIVG) traverse the membrane as a helical segment. Residues 115-126 (DAGVRGTAQQPR) are Cytoplasmic-facing. The chain crosses the membrane as a helical span at residues 127 to 152 (LFVGMILILIFAEVLGLYGLIVAIYL). At 153-156 (YTKQ) the chain is on the lumenal side.

Belongs to the V-ATPase proteolipid subunit family. As to quaternary structure, V-ATPase is a heteromultimeric enzyme made up of two complexes: the ATP-hydrolytic V1 complex and the proton translocation V0 complex. The V1 complex consists of three catalytic AB heterodimers that form a heterohexamer, three peripheral stalks each consisting of EG heterodimers, one central rotor including subunits D and F, and the regulatory subunits C and H. The proton translocation complex V0 consists of the proton transport subunit a, a ring of proteolipid subunits c9c'', rotary subunit d, subunits e and f, and the accessory subunits VhaAC45 and ATP6AP2.

The protein resides in the membrane. In terms of biological role, proton-conducting pore forming subunit of the V0 complex of vacuolar(H+)-ATPase (V-ATPase), a multisubunit enzyme composed of a peripheral complex (V1) that hydrolyzes ATP and a membrane integral complex (V0) that translocates protons. V-ATPase is responsible for acidifying and maintaining the pH of intracellular compartments and in some cell types, is targeted to the plasma membrane, where it is responsible for acidifying the extracellular environment. The protein is V-type proton ATPase 16 kDa proteolipid subunit c (VHA16) of Manduca sexta (Tobacco hawkmoth).